A 175-amino-acid polypeptide reads, in one-letter code: uncharacterized protein (175 aa).

Residues lysine 107–glutamate 138 adopt a coiled-coil conformation.

This is an uncharacterized protein from Aquifex aeolicus (strain VF5).